We begin with the raw amino-acid sequence, 179 residues long: Transcriptional regulator ICP22 homolog (179 aa).

Over residues 1-12 the composition is skewed to basic and acidic residues; it reads MSRDRDRARPDT. The interval 1–40 is disordered; sequence MSRDRDRARPDTRLSSSDNESDDEDYQLPHSHPEYGSDSS.

This sequence belongs to the herpesviridae ICP22 family.

The protein is Transcriptional regulator ICP22 homolog (MDV088) of Gallid herpesvirus 2 (strain Chicken/Md5/ATCC VR-987) (GaHV-2).